We begin with the raw amino-acid sequence, 178 residues long: Mediator of RNA polymerase II transcription subunit 28 (178 aa).

The interval 1–43 is disordered; sequence MAASLGGMFAGQPPGPPPPPPGLPGQASLLQAAPGAPRPSNST. Over residues 13-23 the composition is skewed to pro residues; the sequence is PPGPPPPPPGL. Residues 109 to 145 adopt a coiled-coil conformation; it reads QVIKEDVSELRSELQRKDALVQKHLTKLRHWQQVLED.

The protein belongs to the Mediator complex subunit 28 family. As to quaternary structure, forms a ternary complex with NF2/merlin and GRB2. Binds to actin. Component of the Mediator complex, which is probably composed of MED1, MED4, MED6, MED7, MED8, MED9, MED10, MED11, MED12, MED13, MED13L, MED14, MED15, MED16, MED17, MED18, MED19, MED20, MED21, MED22, MED23, MED24, MED25, MED26, MED27, MED29, MED30, MED31, CCNC, CDK8 and CDC2L6/CDK11. The MED12, MED13, CCNC and CDK8 subunits form a distinct module termed the CDK8 module. Mediator containing the CDK8 module is less active than Mediator lacking this module in supporting transcriptional activation. Individual preparations of the Mediator complex lacking one or more distinct subunits have been variously termed ARC, CRSP, DRIP, PC2, SMCC and TRAP.

Its subcellular location is the nucleus. The protein localises to the cytoplasm. The protein resides in the membrane. Functionally, may be part of a complex containing NF2/merlin that participates in cellular signaling to the actin cytoskeleton downstream of tyrosine kinase signaling pathways. Component of the Mediator complex, a coactivator involved in the regulated transcription of nearly all RNA polymerase II-dependent genes. Mediator functions as a bridge to convey information from gene-specific regulatory proteins to the basal RNA polymerase II transcription machinery. Mediator is recruited to promoters by direct interactions with regulatory proteins and serves as a scaffold for the assembly of a functional preinitiation complex with RNA polymerase II and the general transcription factors. The sequence is that of Mediator of RNA polymerase II transcription subunit 28 (Med28) from Rattus norvegicus (Rat).